A 578-amino-acid polypeptide reads, in one-letter code: Putative diflavin flavoprotein A 2 (578 aa).

The zinc metallo-hydrolase stretch occupies residues 39-233 (QQGTTSNSYL…PPPRLYAPAH (195 aa)). The 143-residue stretch at 262 to 404 (VALFYASAYG…AANEFAQALK (143 aa)) folds into the Flavodoxin-like domain. The tract at residues 429–578 (VNRVVGSLCV…TAIQHRKTSS (150 aa)) is flavodoxin-reductase-like.

In the N-terminal section; belongs to the zinc metallo-hydrolase group 3 family. It in the C-terminal section; belongs to the flavodoxin reductase family. It depends on Fe cation as a cofactor.

Functionally, mediates electron transfer from NADH to oxygen, reducing it to water. This modular protein has 3 redox cofactors, in other organisms the same activity requires 2 or 3 proteins. This is Putative diflavin flavoprotein A 2 (dfa2) from Thermosynechococcus vestitus (strain NIES-2133 / IAM M-273 / BP-1).